The following is a 168-amino-acid chain: Ribulose bisphosphate carboxylase small subunit, chloroplastic (168 aa).

Residues 1–28 (MASIAAKSVSLRAATRRAAPVAAPADAR) constitute a chloroplast transit peptide.

Belongs to the RuBisCO small chain family. Heterohexadecamer of 8 large and 8 small subunits.

The protein localises to the plastid. It is found in the chloroplast. Functionally, ruBisCO catalyzes two reactions: the carboxylation of D-ribulose 1,5-bisphosphate, the primary event in carbon dioxide fixation, as well as the oxidative fragmentation of the pentose substrate. Both reactions occur simultaneously and in competition at the same active site. Although the small subunit is not catalytic it is essential for maximal activity. This is Ribulose bisphosphate carboxylase small subunit, chloroplastic from Chlamydomonas moewusii (Chlamydomonas eugametos).